We begin with the raw amino-acid sequence, 352 residues long: Photosystem II D2 protein (352 aa).

The residue at position 2 (Thr-2) is an N-acetylthreonine. Thr-2 carries the post-translational modification Phosphothreonine. The helical transmembrane segment at 40-60 (CAYMALGGWLTGTTFVTSWYT) threads the bilayer. Residue His-117 participates in chlorophyll a binding. A helical transmembrane segment spans residues 124–140 (GFMLRQFEIAQSLKLRP). Pheophytin a-binding residues include Gln-129 and Asn-142. The chain crosses the membrane as a helical span at residues 152–165 (VFVSVFLIYPLGQA). His-197 lines the chlorophyll a pocket. The chain crosses the membrane as a helical span at residues 207 to 227 (AALLCAIHGATVENTLFEDGD). Positions 214 and 261 each coordinate a plastoquinone. His-214 is a Fe cation binding site. Fe cation is bound at residue His-268. The chain crosses the membrane as a helical span at residues 278–294 (GLWMSAIGVVGLALNLR).

It belongs to the reaction center PufL/M/PsbA/D family. In terms of assembly, PSII is composed of 1 copy each of membrane proteins PsbA, PsbB, PsbC, PsbD, PsbE, PsbF, PsbH, PsbI, PsbJ, PsbK, PsbL, PsbM, PsbT, PsbX, PsbY, PsbZ, Psb30/Ycf12, at least 3 peripheral proteins of the oxygen-evolving complex and a large number of cofactors. It forms dimeric complexes. Requires The D1/D2 heterodimer binds P680, chlorophylls that are the primary electron donor of PSII, and subsequent electron acceptors. It shares a non-heme iron and each subunit binds pheophytin, quinone, additional chlorophylls, carotenoids and lipids. There is also a Cl(-1) ion associated with D1 and D2, which is required for oxygen evolution. The PSII complex binds additional chlorophylls, carotenoids and specific lipids. as cofactor.

It localises to the plastid. It is found in the chloroplast thylakoid membrane. It catalyses the reaction 2 a plastoquinone + 4 hnu + 2 H2O = 2 a plastoquinol + O2. In terms of biological role, photosystem II (PSII) is a light-driven water:plastoquinone oxidoreductase that uses light energy to abstract electrons from H(2)O, generating O(2) and a proton gradient subsequently used for ATP formation. It consists of a core antenna complex that captures photons, and an electron transfer chain that converts photonic excitation into a charge separation. The D1/D2 (PsbA/PsbD) reaction center heterodimer binds P680, the primary electron donor of PSII as well as several subsequent electron acceptors. D2 is needed for assembly of a stable PSII complex. This is Photosystem II D2 protein from Stigeoclonium helveticum (Green alga).